Consider the following 92-residue polypeptide: MLYKKLRSQGNFRKNDSAYFKLENKRELKGDNLPVEEKVRQTIEKFKDDVSEIRRLADDSDFGCNGKETGGAMHIVCFFQKNYDWMKGQWQN.

In Trichostrongylus colubriformis (Black scour worm), this protein is 11 kDa excretory-secretory protein.